The chain runs to 90 residues: UPF0237 protein MJ1558 (90 aa).

Positions 5–79 (VVSVIGQDRT…EELGVQVIVQ (75 aa)) constitute an ACT domain.

It belongs to the UPF0237 family.

This is UPF0237 protein MJ1558 from Methanocaldococcus jannaschii (strain ATCC 43067 / DSM 2661 / JAL-1 / JCM 10045 / NBRC 100440) (Methanococcus jannaschii).